A 429-amino-acid chain; its full sequence is Trigger factor (429 aa).

The 86-residue stretch at 161–246 (GDRLSIDFKG…INEIASPKEL (86 aa)) folds into the PPIase FKBP-type domain.

It belongs to the FKBP-type PPIase family. Tig subfamily.

It is found in the cytoplasm. The catalysed reaction is [protein]-peptidylproline (omega=180) = [protein]-peptidylproline (omega=0). In terms of biological role, involved in protein export. Acts as a chaperone by maintaining the newly synthesized protein in an open conformation. Functions as a peptidyl-prolyl cis-trans isomerase. This chain is Trigger factor, found in Vesicomyosocius okutanii subsp. Calyptogena okutanii (strain HA).